Consider the following 119-residue polypeptide: Large ribosomal subunit protein uL18 (119 aa).

It belongs to the universal ribosomal protein uL18 family. Part of the 50S ribosomal subunit; part of the 5S rRNA/L5/L18/L25 subcomplex. Contacts the 5S and 23S rRNAs.

This is one of the proteins that bind and probably mediate the attachment of the 5S RNA into the large ribosomal subunit, where it forms part of the central protuberance. The protein is Large ribosomal subunit protein uL18 of Borrelia hermsii (strain HS1 / DAH).